The sequence spans 299 residues: Sulfate adenylyltransferase subunit 2 (299 aa).

This sequence belongs to the PAPS reductase family. CysD subfamily. Sulfate-activating enzymes, NodP and NodQ, may be physically associated.

It carries out the reaction sulfate + ATP + H(+) = adenosine 5'-phosphosulfate + diphosphate. Its function is as follows. Proposed to provide activated sulfate for transfer to nod factor. The chain is Sulfate adenylyltransferase subunit 2 (nodP) from Rhizobium sp. (strain BR816).